The chain runs to 163 residues: ECF RNA polymerase sigma factor SigM (163 aa).

Residues 30–43 carry the Polymerase core binding motif; the sequence is DLLQETFMRAYIHI. The segment at residues 127 to 146 is a DNA-binding region (H-T-H motif); it reads YKEASHIMNISEANFKSVLF.

It belongs to the sigma-70 factor family. ECF subfamily. In terms of assembly, interacts with the N-terminus of YhdL, which is probably its anti-sigma factor. Interacts transiently with the RNAP core.

Sigma factors are initiation factors that promote the attachment of RNA polymerase (RNAP) to specific initiation sites and are then released. Extracytoplasmic function (ECF) sigma factors are held in an inactive form by a cognate anti-sigma factor (YhdL) until released. This sigma factor is involved in the maintenance of membrane and cell wall integrity in response to environmental stresses including salt, acid, ethanol and antibiotics stress. Partially regulates transcription from a number of genes including disA. Associates with RNAP core under all growth phases. The chain is ECF RNA polymerase sigma factor SigM (sigM) from Bacillus subtilis (strain 168).